The following is a 529-amino-acid chain: T-complex protein 1 subunit delta (529 aa).

Belongs to the TCP-1 chaperonin family. In terms of assembly, heterooligomeric complex of about 850 to 900 kDa that forms two stacked rings, 12 to 16 nm in diameter.

It is found in the cytoplasm. Functionally, molecular chaperone; assists the folding of proteins upon ATP hydrolysis. Known to play a role, in vitro, in the folding of actin and tubulin. The protein is T-complex protein 1 subunit delta (CCT4) of Candida glabrata (strain ATCC 2001 / BCRC 20586 / JCM 3761 / NBRC 0622 / NRRL Y-65 / CBS 138) (Yeast).